Consider the following 244-residue polypeptide: 7-cyano-7-deazaguanine synthase (244 aa).

14–24 (FSGGQDSATCL) is an ATP binding site. Residues cysteine 202, cysteine 217, cysteine 220, and cysteine 223 each contribute to the Zn(2+) site.

Belongs to the QueC family. Requires Zn(2+) as cofactor.

The catalysed reaction is 7-carboxy-7-deazaguanine + NH4(+) + ATP = 7-cyano-7-deazaguanine + ADP + phosphate + H2O + H(+). It functions in the pathway purine metabolism; 7-cyano-7-deazaguanine biosynthesis. Catalyzes the ATP-dependent conversion of 7-carboxy-7-deazaguanine (CDG) to 7-cyano-7-deazaguanine (preQ(0)). The chain is 7-cyano-7-deazaguanine synthase from Paraburkholderia phytofirmans (strain DSM 17436 / LMG 22146 / PsJN) (Burkholderia phytofirmans).